The chain runs to 892 residues: E3 ubiquitin ligase PQT3-like (892 aa).

The region spanning isoleucine 3–proline 76 is the DWNN domain. The CCHC-type zinc-finger motif lies at cysteine 210–proline 224. At serine 285 the chain carries Phosphoserine. Residues cysteine 295–cysteine 333 form an RING-type; degenerate zinc finger. Disordered stretches follow at residues aspartate 375 to aspartate 408, threonine 459 to asparagine 493, and methionine 623 to alanine 892. Serine 404 is modified (phosphoserine). Basic and acidic residues predominate over residues methionine 623–asparagine 644. Residues methionine 647 to arginine 666 are compositionally biased toward polar residues. The span at histidine 674–proline 692 shows a compositional bias: basic and acidic residues. Residues threonine 693–serine 700 carry the Nuclear localization signal motif. Over residues glutamate 708 to arginine 745 the composition is skewed to basic and acidic residues. The span at serine 810–serine 832 shows a compositional bias: low complexity. Serine 866 is subject to Phosphoserine. Positions serine 875–alanine 892 are enriched in basic and acidic residues.

Its subcellular location is the nucleus. The enzyme catalyses S-ubiquitinyl-[E2 ubiquitin-conjugating enzyme]-L-cysteine + [acceptor protein]-L-lysine = [E2 ubiquitin-conjugating enzyme]-L-cysteine + N(6)-ubiquitinyl-[acceptor protein]-L-lysine.. The protein is E3 ubiquitin ligase PQT3-like of Arabidopsis thaliana (Mouse-ear cress).